A 469-amino-acid polypeptide reads, in one-letter code: UDP-N-acetylmuramate--L-alanine ligase (469 aa).

Position 112-118 (112-118 (GTHGKTT)) interacts with ATP.

It belongs to the MurCDEF family.

It localises to the cytoplasm. It carries out the reaction UDP-N-acetyl-alpha-D-muramate + L-alanine + ATP = UDP-N-acetyl-alpha-D-muramoyl-L-alanine + ADP + phosphate + H(+). Its pathway is cell wall biogenesis; peptidoglycan biosynthesis. Cell wall formation. The polypeptide is UDP-N-acetylmuramate--L-alanine ligase (Herminiimonas arsenicoxydans).